A 339-amino-acid polypeptide reads, in one-letter code: Fructose-1,6-bisphosphatase, cytosolic (339 aa).

5 residues coordinate Mg(2+): E71, E100, D121, L123, and D124. Residues 124–127 (DGSS), N215, Y247, Y267, and K277 each bind substrate. E283 serves as a coordination point for Mg(2+).

It belongs to the FBPase class 1 family. The cofactor is Mg(2+).

The protein resides in the cytoplasm. It carries out the reaction beta-D-fructose 1,6-bisphosphate + H2O = beta-D-fructose 6-phosphate + phosphate. In Oryza sativa subsp. indica (Rice), this protein is Fructose-1,6-bisphosphatase, cytosolic.